The chain runs to 320 residues: Homoserine kinase (320 aa).

100–110 (PLSSGMGSSAA) is a binding site for ATP.

It belongs to the GHMP kinase family. Homoserine kinase subfamily.

The protein localises to the cytoplasm. The enzyme catalyses L-homoserine + ATP = O-phospho-L-homoserine + ADP + H(+). It functions in the pathway amino-acid biosynthesis; L-threonine biosynthesis; L-threonine from L-aspartate: step 4/5. In terms of biological role, catalyzes the ATP-dependent phosphorylation of L-homoserine to L-homoserine phosphate. In Chlorobium phaeovibrioides (strain DSM 265 / 1930) (Prosthecochloris vibrioformis (strain DSM 265)), this protein is Homoserine kinase.